Reading from the N-terminus, the 207-residue chain is Outer-membrane lipoprotein carrier protein (207 aa).

A signal peptide spans methionine 1–alanine 21.

The protein belongs to the LolA family. As to quaternary structure, monomer.

The protein localises to the periplasm. Its function is as follows. Participates in the translocation of lipoproteins from the inner membrane to the outer membrane. Only forms a complex with a lipoprotein if the residue after the N-terminal Cys is not an aspartate (The Asp acts as a targeting signal to indicate that the lipoprotein should stay in the inner membrane). This Pseudomonas entomophila (strain L48) protein is Outer-membrane lipoprotein carrier protein.